The chain runs to 344 residues: Succinylglutamate desuccinylase (344 aa).

Positions 63, 66, and 160 each coordinate Zn(2+). Glu224 is a catalytic residue.

Belongs to the AspA/AstE family. Succinylglutamate desuccinylase subfamily. The cofactor is Zn(2+).

It catalyses the reaction N-succinyl-L-glutamate + H2O = L-glutamate + succinate. The protein operates within amino-acid degradation; L-arginine degradation via AST pathway; L-glutamate and succinate from L-arginine: step 5/5. In terms of biological role, transforms N(2)-succinylglutamate into succinate and glutamate. In Shewanella sp. (strain MR-7), this protein is Succinylglutamate desuccinylase.